The primary structure comprises 182 residues: Adenylate kinase (182 aa).

Position 12–17 (12–17 (GAGKGT)) interacts with ATP. An NMP region spans residues 32–61 (STGDLLRAEVGAKTPLGQEAAAVMNRGELV). Residues threonine 33, arginine 38, 59–61 (ELV), 85–88 (GFPR), and glutamine 92 each bind AMP. Positions 126-132 (SRGRSDD) are LID. Arginine 127 provides a ligand contact to ATP. 2 residues coordinate AMP: arginine 129 and arginine 140. Residue glycine 168 participates in ATP binding.

This sequence belongs to the adenylate kinase family. Monomer.

The protein resides in the cytoplasm. The catalysed reaction is AMP + ATP = 2 ADP. It functions in the pathway purine metabolism; AMP biosynthesis via salvage pathway; AMP from ADP: step 1/1. Its function is as follows. Catalyzes the reversible transfer of the terminal phosphate group between ATP and AMP. Plays an important role in cellular energy homeostasis and in adenine nucleotide metabolism. This chain is Adenylate kinase, found in Prochlorococcus marinus (strain MIT 9303).